A 662-amino-acid chain; its full sequence is Sporulation protein RMD8 (662 aa).

Disordered stretches follow at residues M1–K136, Y286–P320, and L346–F406. S2 bears the N-acetylserine mark. Residues S99–S121 show a composition bias toward basic and acidic residues. Residues Y286–V304 show a composition bias toward polar residues. Over residues S383–T395 the composition is skewed to low complexity. Residues V630–T647 form a helical membrane-spanning segment.

Belongs to the RMD1/sif2 family.

It localises to the membrane. Its function is as follows. Required for sporulation. In Saccharomyces cerevisiae (strain ATCC 204508 / S288c) (Baker's yeast), this protein is Sporulation protein RMD8 (RMD8).